We begin with the raw amino-acid sequence, 276 residues long: NAD kinase (276 aa).

Asp-68 (proton acceptor) is an active-site residue. NAD(+) contacts are provided by residues 68-69 (DG), Arg-73, 138-139 (NE), Lys-149, Asp-168, 179-184 (TAYSLS), and Gln-237.

It belongs to the NAD kinase family. A divalent metal cation is required as a cofactor.

It is found in the cytoplasm. It carries out the reaction NAD(+) + ATP = ADP + NADP(+) + H(+). Functionally, involved in the regulation of the intracellular balance of NAD and NADP, and is a key enzyme in the biosynthesis of NADP. Catalyzes specifically the phosphorylation on 2'-hydroxyl of the adenosine moiety of NAD to yield NADP. This is NAD kinase from Methanopyrus kandleri (strain AV19 / DSM 6324 / JCM 9639 / NBRC 100938).